We begin with the raw amino-acid sequence, 213 residues long: A-type ATP synthase subunit D (213 aa).

This sequence belongs to the V-ATPase D subunit family. As to quaternary structure, has multiple subunits with at least A(3), B(3), C, D, E, F, H, I and proteolipid K(x).

The protein resides in the cell membrane. Component of the A-type ATP synthase that produces ATP from ADP in the presence of a proton gradient across the membrane. The protein is A-type ATP synthase subunit D of Saccharolobus solfataricus (strain ATCC 35092 / DSM 1617 / JCM 11322 / P2) (Sulfolobus solfataricus).